We begin with the raw amino-acid sequence, 1204 residues long: ATP-dependent helicase/nuclease subunit A (1204 aa).

Residues 2 to 472 enclose the UvrD-like helicase ATP-binding domain; the sequence is PQFTKEQEKA…ILLSDNFRST (471 aa). Residue 23 to 30 participates in ATP binding; the sequence is ASAGSGKT. Residues 500–783 form the UvrD-like helicase C-terminal domain; the sequence is GQLIFGAKYY…RLMTIHGSKG (284 aa).

The protein belongs to the helicase family. AddA subfamily. Heterodimer of AddA and AddB/RexB. Requires Mg(2+) as cofactor.

The catalysed reaction is Couples ATP hydrolysis with the unwinding of duplex DNA by translocating in the 3'-5' direction.. It catalyses the reaction ATP + H2O = ADP + phosphate + H(+). In terms of biological role, the heterodimer acts as both an ATP-dependent DNA helicase and an ATP-dependent, dual-direction single-stranded exonuclease. Recognizes the chi site generating a DNA molecule suitable for the initiation of homologous recombination. The AddA nuclease domain is required for chi fragment generation; this subunit has the helicase and 3' -&gt; 5' nuclease activities. The sequence is that of ATP-dependent helicase/nuclease subunit A from Lactobacillus helveticus (strain DPC 4571).